The chain runs to 253 residues: uncharacterized protein (253 aa).

The NADP(+) site is built by Ile17, Ser36, Asp62, Asn89, Lys123, Tyr158, Lys162, Val191, and Thr193. The Proton acceptor role is filled by Tyr158. Residue Lys162 is the Lowers pKa of active site Tyr of the active site.

It belongs to the short-chain dehydrogenases/reductases (SDR) family.

The protein resides in the cytoplasm. Its subcellular location is the nucleus. This is an uncharacterized protein from Schizosaccharomyces pombe (strain 972 / ATCC 24843) (Fission yeast).